The sequence spans 496 residues: D-2-hydroxyglutarate--pyruvate transhydrogenase DLD3 (496 aa).

Lysine 17 is covalently cross-linked (Glycyl lysine isopeptide (Lys-Gly) (interchain with G-Cter in ubiquitin)). One can recognise an FAD-binding PCMH-type domain in the interval 64–243 (YRGQSNLILL…TGVSIVAAAK (180 aa)).

This sequence belongs to the FAD-binding oxidoreductase/transferase type 4 family. It depends on FAD as a cofactor.

The protein resides in the cytoplasm. The enzyme catalyses (R)-lactate + 2 Fe(III)-[cytochrome c] = 2 Fe(II)-[cytochrome c] + pyruvate + 2 H(+). It catalyses the reaction (R)-2-hydroxyglutarate + pyruvate = (R)-lactate + 2-oxoglutarate. Its function is as follows. Catalyzes the reversible oxidation of (R)-2-hydroxyglutarate to 2-oxoglutarate coupled to reduction of pyruvate to (R)-lactate. Can also use oxaloacetate as electron acceptor instead of pyruvate producing (R)-malate. The sequence is that of D-2-hydroxyglutarate--pyruvate transhydrogenase DLD3 (DLD3) from Saccharomyces cerevisiae (strain ATCC 204508 / S288c) (Baker's yeast).